Reading from the N-terminus, the 493-residue chain is Matrilin-1 (493 aa).

A signal peptide spans 1–23; sequence MDGIFCALPLSLLLLLQSCGVWG. In terms of domain architecture, VWFA 1 spans 24 to 220; sequence APPQPRGTLC…THKFQEAFCV (197 aa). A glycan (N-linked (GlcNAc...) asparagine) is linked at Asn-74. One can recognise an EGF-like domain in the interval 221-261; it reads VSDLCATGDHDCEQICISTPGSYKCACKEGFTLNNDGKTCS. Disulfide bonds link Cys-225/Cys-236, Cys-232/Cys-245, and Cys-247/Cys-260. The VWFA 2 domain maps to 262–450; the sequence is ACSGGSGSAL…GKKLQMKICV (189 aa). Positions 462-492 form a coiled coil; sequence KFQTKVEELINTLQQKLEAVAKRIEALENKI.

Homotrimer. Expressed in xyphoid cartilage and chondrocytes (at protein level).

It localises to the secreted. The protein resides in the extracellular space. It is found in the extracellular matrix. A major component of the extracellular matrix of non-articular cartilage. Binds to type 2 collagens and forms long concatenated protein networks as part of the extracellular matrix. Required for the network-like organization and bundling of collagen fibrils surrounding chondrocytes in the zones of maturation and hypertrophy. Required for mechanotransduction and adaption to mechanical loading in cartilage chondrocytes, resulting in an increase in expression of the extracellular matrix components ACAN and COL2A1. Acts as a moderator of angiogenesis in response to injury. The sequence is that of Matrilin-1 from Gallus gallus (Chicken).